The sequence spans 404 residues: MKPPFQEALGIIQQLKQHGYDAYFVGGAVRDLLLGRPIGDVDIATSALPEDVMAIFPKTIDVGSKHGTVVVVHKGKAYEVTTFKTDGDYEDYRRPESVTFVRSLEEDLKRRDFTMNAIAMDEYGTIIDPFGGREAIRRRIIRTVGEAEKRFREDALRMMRAVRFVSELGFALAPDTEQAIVQNAPLLAHISVERMTMEMEKLLGGPFAARALPLLAETGLNAYLPGLAGKEKQLRLAAAYRWPWLAAREERWALLCHALGVQESRPFLRAWKLPNKVVDEAGAILTALADIPRPEAWTNEQLFSAGLERALSVETVRAAFTGAPPGPWHEKLRRRFASLPIKTKGELAVNGKDVIEWVGKPAGPWVKEALDAIWRAVVNGEVENEKERIYAWLMERNRTREKNC.

Gly-27 and Arg-30 together coordinate ATP. Positions 27 and 30 each coordinate CTP. 2 residues coordinate Mg(2+): Asp-40 and Asp-42. ATP is bound by residues Arg-111, Asp-154, Arg-157, Arg-160, and Arg-163. Residues Arg-111, Asp-154, Arg-157, Arg-160, and Arg-163 each contribute to the CTP site.

This sequence belongs to the tRNA nucleotidyltransferase/poly(A) polymerase family. Bacterial CCA-adding enzyme type 3 subfamily. In terms of assembly, homodimer. Requires Mg(2+) as cofactor.

The enzyme catalyses a tRNA precursor + 2 CTP + ATP = a tRNA with a 3' CCA end + 3 diphosphate. The catalysed reaction is a tRNA with a 3' CCA end + 2 CTP + ATP = a tRNA with a 3' CCACCA end + 3 diphosphate. In terms of biological role, catalyzes the addition and repair of the essential 3'-terminal CCA sequence in tRNAs without using a nucleic acid template. Adds these three nucleotides in the order of C, C, and A to the tRNA nucleotide-73, using CTP and ATP as substrates and producing inorganic pyrophosphate. tRNA 3'-terminal CCA addition is required both for tRNA processing and repair. Also involved in tRNA surveillance by mediating tandem CCA addition to generate a CCACCA at the 3' terminus of unstable tRNAs. While stable tRNAs receive only 3'-terminal CCA, unstable tRNAs are marked with CCACCA and rapidly degraded. The structural flexibility of RNA controls the choice between CCA versus CCACCA addition: following the first CCA addition cycle, nucleotide-binding to the active site triggers a clockwise screw motion, producing torque on the RNA. This ejects stable RNAs, whereas unstable RNAs are refolded while bound to the enzyme and subjected to a second CCA catalytic cycle. This Geobacillus stearothermophilus (Bacillus stearothermophilus) protein is CCA-adding enzyme.